The chain runs to 699 residues: Chitin synthase 7 (699 aa).

6 helical membrane-spanning segments follow: residues 19 to 39 (IVGV…AAFL), 58 to 80 (SVVV…VVTL), 98 to 118 (LQWF…LFCI), 445 to 465 (FMQN…LAII), 474 to 494 (LPVG…IYFG), and 507 to 527 (VMFV…IFTA). Residues 628–648 (AAGGSGEASEPGTRWAPDPRE) are disordered.

This sequence belongs to the chitin synthase family. Class VI subfamily.

The protein resides in the cell membrane. It catalyses the reaction [(1-&gt;4)-N-acetyl-beta-D-glucosaminyl](n) + UDP-N-acetyl-alpha-D-glucosamine = [(1-&gt;4)-N-acetyl-beta-D-glucosaminyl](n+1) + UDP + H(+). Polymerizes chitin, a structural polymer of the cell wall and septum, by transferring the sugar moiety of UDP-GlcNAc to the non-reducing end of the growing chitin polymer. Plays a role in cell wall integrity. Required to successfully penetrate the host plants and thus plays a key role in pathogenicity. This is Chitin synthase 7 from Verticillium dahliae (strain VdLs.17 / ATCC MYA-4575 / FGSC 10137) (Verticillium wilt).